The following is a 197-amino-acid chain: Nucleoside triphosphate pyrophosphatase (197 aa).

D75 serves as the catalytic Proton acceptor.

This sequence belongs to the Maf family. A divalent metal cation serves as cofactor.

The protein localises to the cytoplasm. It catalyses the reaction a ribonucleoside 5'-triphosphate + H2O = a ribonucleoside 5'-phosphate + diphosphate + H(+). The enzyme catalyses a 2'-deoxyribonucleoside 5'-triphosphate + H2O = a 2'-deoxyribonucleoside 5'-phosphate + diphosphate + H(+). Its function is as follows. Nucleoside triphosphate pyrophosphatase. May have a dual role in cell division arrest and in preventing the incorporation of modified nucleotides into cellular nucleic acids. This Haemophilus ducreyi (strain 35000HP / ATCC 700724) protein is Nucleoside triphosphate pyrophosphatase.